Consider the following 271-residue polypeptide: Formamidopyrimidine-DNA glycosylase (271 aa).

Residue Pro2 is the Schiff-base intermediate with DNA of the active site. The active-site Proton donor is Glu3. Lys58 acts as the Proton donor; for beta-elimination activity in catalysis. DNA-binding residues include His92, Arg111, and Lys152. Residues 237-271 (YVYGKVQKPCKICNNTITLIRQNGRSTYFCNACQN) form an FPG-type zinc finger. Arg261 acts as the Proton donor; for delta-elimination activity in catalysis.

It belongs to the FPG family. In terms of assembly, monomer. Zn(2+) is required as a cofactor.

It catalyses the reaction Hydrolysis of DNA containing ring-opened 7-methylguanine residues, releasing 2,6-diamino-4-hydroxy-5-(N-methyl)formamidopyrimidine.. The catalysed reaction is 2'-deoxyribonucleotide-(2'-deoxyribose 5'-phosphate)-2'-deoxyribonucleotide-DNA = a 3'-end 2'-deoxyribonucleotide-(2,3-dehydro-2,3-deoxyribose 5'-phosphate)-DNA + a 5'-end 5'-phospho-2'-deoxyribonucleoside-DNA + H(+). Its function is as follows. Involved in base excision repair of DNA damaged by oxidation or by mutagenic agents. Acts as a DNA glycosylase that recognizes and removes damaged bases. Has a preference for oxidized purines, such as 7,8-dihydro-8-oxoguanine (8-oxoG). Has AP (apurinic/apyrimidinic) lyase activity and introduces nicks in the DNA strand. Cleaves the DNA backbone by beta-delta elimination to generate a single-strand break at the site of the removed base with both 3'- and 5'-phosphates. This is Formamidopyrimidine-DNA glycosylase from Wolbachia sp. subsp. Brugia malayi (strain TRS).